The following is a 236-amino-acid chain: 2-C-methyl-D-erythritol 4-phosphate cytidylyltransferase (236 aa).

It belongs to the IspD/TarI cytidylyltransferase family. IspD subfamily.

It catalyses the reaction 2-C-methyl-D-erythritol 4-phosphate + CTP + H(+) = 4-CDP-2-C-methyl-D-erythritol + diphosphate. Its pathway is isoprenoid biosynthesis; isopentenyl diphosphate biosynthesis via DXP pathway; isopentenyl diphosphate from 1-deoxy-D-xylulose 5-phosphate: step 2/6. In terms of biological role, catalyzes the formation of 4-diphosphocytidyl-2-C-methyl-D-erythritol from CTP and 2-C-methyl-D-erythritol 4-phosphate (MEP). The protein is 2-C-methyl-D-erythritol 4-phosphate cytidylyltransferase of Burkholderia multivorans (strain ATCC 17616 / 249).